A 234-amino-acid polypeptide reads, in one-letter code: Purine nucleoside phosphorylase DeoD-type (234 aa).

His4 contacts a purine D-ribonucleoside. Phosphate-binding positions include Gly20, Arg24, Arg43, and 87–90; that span reads RIGT. Residues 179–181 and 203–204 contribute to the a purine D-ribonucleoside site; these read EME and SD. Asp204 functions as the Proton donor in the catalytic mechanism.

The protein belongs to the PNP/UDP phosphorylase family. As to quaternary structure, homohexamer; trimer of homodimers.

The catalysed reaction is a purine D-ribonucleoside + phosphate = a purine nucleobase + alpha-D-ribose 1-phosphate. It carries out the reaction a purine 2'-deoxy-D-ribonucleoside + phosphate = a purine nucleobase + 2-deoxy-alpha-D-ribose 1-phosphate. Its function is as follows. Catalyzes the reversible phosphorolytic breakdown of the N-glycosidic bond in the beta-(deoxy)ribonucleoside molecules, with the formation of the corresponding free purine bases and pentose-1-phosphate. This chain is Purine nucleoside phosphorylase DeoD-type, found in Helicobacter pylori (strain Shi470).